Here is a 98-residue protein sequence, read N- to C-terminus: Transcription elongation factor A protein-like 7 (98 aa).

A compositionally biased stretch (basic and acidic residues) spans 1-24 (MQRSCNEKEGKPKCSEPKREEEHP). A disordered region spans residues 1–31 (MQRSCNEKEGKPKCSEPKREEEHPYGAFEGQ). Residues 59–89 (GEEMTGEEEEMERCLEEIRSLRKKFRALHSN) adopt a coiled-coil conformation.

It belongs to the TFS-II family. TFA subfamily.

Its subcellular location is the nucleus. Plays a role in the negative regulation of NF-kappa-B signaling at the basal level by modulating transcriptional activity of NF-kappa-B on its target gene promoters. Associates with cyclin D1 promoter containing Myc E-box sequence and transcriptionally represses cyclin D1 expression. Regulates telomerase reverse transcriptase expression and telomerase activity in both ALT (alternative lengthening of telomeres)and telomerase-positive cell lines. In Rattus norvegicus (Rat), this protein is Transcription elongation factor A protein-like 7 (Tceal7).